We begin with the raw amino-acid sequence, 23 residues long: Basic phospholipase A2 homolog CTs-K49c (23 aa).

Contains 7 disulfide bonds. As to expression, expressed by the venom gland.

The protein resides in the secreted. Its function is as follows. Snake venom phospholipase A2 homolog that lacks catalytic activity. Shows myotoxic activities. Induces local edema a few hours after injection (5-10 ug) in the hind paw. This Trimeresurus stejnegeri (Chinese green tree viper) protein is Basic phospholipase A2 homolog CTs-K49c.